Here is a 525-residue protein sequence, read N- to C-terminus: Endoglucanase 10 (525 aa).

The signal sequence occupies residues 1–26; the sequence is MEEKSKSRGWCGWFIAIIVLASVILA. The active-site Nucleophile is the Asp109. N-linked (GlcNAc...) asparagine glycosylation occurs at Asn259. His442 is an active-site residue. 2 N-linked (GlcNAc...) asparagine glycosylation sites follow: Asn464 and Asn484. Active-site residues include Asp489 and Glu498.

Belongs to the glycosyl hydrolase 9 (cellulase E) family.

The protein localises to the secreted. The enzyme catalyses Endohydrolysis of (1-&gt;4)-beta-D-glucosidic linkages in cellulose, lichenin and cereal beta-D-glucans.. The protein is Endoglucanase 10 of Arabidopsis thaliana (Mouse-ear cress).